Here is a 994-residue protein sequence, read N- to C-terminus: Sarcoplasmic/endoplasmic reticulum calcium ATPase 1 (994 aa).

The Cytoplasmic portion of the chain corresponds to 1–48 (MEQAHTKTTEECLAYFGVNENTGLSLDQVKKNFDKFGPNELPAEEGKS). Residues 49 to 69 (LWELVAEQFEDLLVRILLLAA) form a helical membrane-spanning segment. Residues 70-89 (IISFVLAWFEEGEETVTAFV) lie on the Lumenal side of the membrane. Residues 90 to 110 (EPFVILLILIANAVVGVWQER) traverse the membrane as a helical segment. Residues 111-253 (NAEDAIEALK…QEKTPLQQKL (143 aa)) lie on the Cytoplasmic side of the membrane. Residues 254–273 (DEFGEQLSKVISLICVAVWL) traverse the membrane as a helical segment. At 274–295 (INIGHFNDPIHGGSWIKGAIYY) the chain is on the lumenal side. A helical transmembrane segment spans residues 296–313 (FKIAVALAVAAIPEGLPA). Positions 304, 305, 307, and 309 each coordinate Ca(2+). Topologically, residues 314-757 (VITTCLALGT…EEGRAIYNNM (444 aa)) are cytoplasmic. Aspartate 351 functions as the 4-aspartylphosphate intermediate in the catalytic mechanism. Mg(2+) contacts are provided by aspartate 351 and threonine 353. ATP-binding residues include threonine 353, glutamate 442, arginine 489, lysine 515, arginine 560, threonine 625, glycine 626, aspartate 627, arginine 678, and lysine 684. Aspartate 703 serves as a coordination point for Mg(2+). Asparagine 706 contributes to the ATP binding site. Residues 758 to 777 (KQFIRYLISSNVGEVVCIFL) traverse the membrane as a helical segment. Ca(2+) is bound by residues asparagine 768 and glutamate 771. The Lumenal segment spans residues 778-787 (TAALGLPEAL). Residues 788 to 808 (IPVQLLWVNLVTDGLPATALG) form a helical membrane-spanning segment. The tract at residues 788 to 808 (IPVQLLWVNLVTDGLPATALG) is interaction with PLN. Ca(2+)-binding residues include asparagine 796, threonine 799, and aspartate 800. The Cytoplasmic segment spans residues 809–828 (FNPPDLDIMDRPPRSPKEPL). The helical transmembrane segment at 829–851 (ISGWLFFRYMAIGGYVGAATVGA) threads the bilayer. Topologically, residues 852–897 (AAWWFMYADDGPNVTFYQLSHFMQCTEDNPDFEGHECEIFESPVPM) are lumenal. A disulfide bridge connects residues cysteine 876 and cysteine 888. The helical transmembrane segment at 898 to 917 (TMALSVLVTIEMCNALNSLS) threads the bilayer. Glutamate 908 is a binding site for Ca(2+). Topologically, residues 918 to 930 (ENQSLIRMPPWSN) are cytoplasmic. Residues 931 to 949 (FWLLGSICLSMSLHFLILY) form a helical membrane-spanning segment. The interaction with PLN stretch occupies residues 932-943 (WLLGSICLSMSL). The Lumenal segment spans residues 950–964 (VEPLPMIFKLTPLNV). The chain crosses the membrane as a helical span at residues 965–985 (EQWFIVLKMSFPVILLDELLK). Over 986–994 (FVARNYLEG) the chain is Cytoplasmic.

It belongs to the cation transport ATPase (P-type) (TC 3.A.3) family. Type IIA subfamily. As to quaternary structure, interacts with sarcolipin (SLN). Interacts with phospholamban (PLN). Interacts with myoregulin (MRLN). Interacts with DWORF. Interacts with VMP1. Mg(2+) is required as a cofactor.

The protein localises to the endoplasmic reticulum membrane. It localises to the sarcoplasmic reticulum membrane. It catalyses the reaction Ca(2+)(in) + ATP + H2O = Ca(2+)(out) + ADP + phosphate + H(+). Inhibited by sarcolipin (SLN) and myoregulin (MRLN). Also shown to be inhibited by phospholamban (PLN) in vitro. Enhanced by DWORF; DWORF increases activity by displacing sarcolipin (SLN), phospholamban (PLN) and myoregulin (MRLN). Its function is as follows. Key regulator of striated muscle performance by acting as the major Ca(2+) ATPase responsible for the reuptake of cytosolic Ca(2+) into the sarcoplasmic reticulum. Catalyzes the hydrolysis of ATP coupled with the translocation of calcium from the cytosol to the sarcoplasmic reticulum lumen. Contributes to calcium sequestration involved in muscular excitation/contraction. This Pelophylax lessonae (Pool frog) protein is Sarcoplasmic/endoplasmic reticulum calcium ATPase 1 (ATP2A1).